Consider the following 641-residue polypeptide: 1-deoxy-D-xylulose-5-phosphate synthase (641 aa).

Residues His-79 and 120–122 contribute to the thiamine diphosphate site; that span reads GHS. Asp-151 provides a ligand contact to Mg(2+). Residues 152–153, Asn-180, Tyr-290, and Glu-372 each bind thiamine diphosphate; that span reads GS. Asn-180 contributes to the Mg(2+) binding site.

Belongs to the transketolase family. DXPS subfamily. In terms of assembly, homodimer. The cofactor is Mg(2+). Thiamine diphosphate serves as cofactor.

It catalyses the reaction D-glyceraldehyde 3-phosphate + pyruvate + H(+) = 1-deoxy-D-xylulose 5-phosphate + CO2. The protein operates within metabolic intermediate biosynthesis; 1-deoxy-D-xylulose 5-phosphate biosynthesis; 1-deoxy-D-xylulose 5-phosphate from D-glyceraldehyde 3-phosphate and pyruvate: step 1/1. Catalyzes the acyloin condensation reaction between C atoms 2 and 3 of pyruvate and glyceraldehyde 3-phosphate to yield 1-deoxy-D-xylulose-5-phosphate (DXP). In Rhodopseudomonas palustris (strain TIE-1), this protein is 1-deoxy-D-xylulose-5-phosphate synthase.